The sequence spans 539 residues: Chaperonin GroEL (539 aa).

Residues 29–32 (TLGP), 86–90 (DGTTT), Gly-413, and Asp-492 contribute to the ATP site.

It belongs to the chaperonin (HSP60) family. Forms a cylinder of 14 subunits composed of two heptameric rings stacked back-to-back. Interacts with the co-chaperonin GroES.

Its subcellular location is the cytoplasm. The catalysed reaction is ATP + H2O + a folded polypeptide = ADP + phosphate + an unfolded polypeptide.. Its function is as follows. Together with its co-chaperonin GroES, plays an essential role in assisting protein folding. The GroEL-GroES system forms a nano-cage that allows encapsulation of the non-native substrate proteins and provides a physical environment optimized to promote and accelerate protein folding. In Fusobacterium nucleatum subsp. polymorphum (Fusobacterium polymorphum), this protein is Chaperonin GroEL.